Consider the following 118-residue polypeptide: DNA-binding protein inhibitor ID-3-B (118 aa).

The bHLH domain maps to 32–84 (SLKGAGIDETMGLLYDMNGCYSKLKELVPGIPQGSKLSQVEILQHVIDYIFDL).

Homodimer. Heterodimer with other HLH proteins. Interacts (via HLH domain) with the bHLH protein hes4/hairy2 (via Orange domain). Interacts with stat3.

It is found in the nucleus. Functionally, transcriptional regulator (lacking a basic DNA binding domain) which negatively regulates the basic helix-loop-helix (bHLH) transcription factors by forming heterodimers and inhibiting their DNA binding and transcriptional activity. Influences cell fate decisions in the embryo by sequestering and blocking the activity of the bHLH transcription factors that control these decisions. Inhibits the binding of myogenic bHLH-containing complexes to E-box DNA, thereby preventing activation of muscle-specific target genes. Also inhibits the activity of neurogenic factor neurod1/neuroD. Plays a role in cell cycle progression and survival of neural crest progenitors; binding to either hes4-B/hairy2b or stat3 blocks the formation of transcription factor complexes and the repressor function of hes4-B/hairy2B, to allow neural crest progenitors to differentiate. May play a role in the regulation of the circadian rhythm. The chain is DNA-binding protein inhibitor ID-3-B (id3-b) from Xenopus laevis (African clawed frog).